A 51-amino-acid polypeptide reads, in one-letter code: EAETATKSCSGRQANQVSLPKQPASQPRGDPTGPKESKKKVETETETDPVN.

Residues 1-25 (EAETATKSCSGRQANQVSLPKQPAS) show a composition bias toward polar residues. A disordered region spans residues 1–51 (EAETATKSCSGRQANQVSLPKQPASQPRGDPTGPKESKKKVETETETDPVN). A Glycyl lysine isopeptide (Lys-Gly) (interchain with G-Cter in ubiquitin) cross-link involves residue lysine 21. Positions 28 to 30 (RGD) match the Cell attachment site motif. Positions 33–43 (GPKESKKKVET) are enriched in basic and acidic residues.

The protein belongs to the lentiviruses Tat family. Interacts with host CCNT1. Associates with the P-TEFb complex composed at least of Tat, P-TEFb (CDK9 and CCNT1), TAR RNA, RNA Pol II. Recruits the HATs CREBBP, TAF1/TFIID, EP300, PCAF and GCN5L2. Interacts with host KAT5/Tip60; this interaction targets the latter to degradation. Interacts with the host deacetylase SIRT1. Interacts with host capping enzyme RNGTT; this interaction stimulates RNGTT. Binds to host KDR, and to the host integrins ITGAV/ITGB3 and ITGA5/ITGB1. Interacts with host KPNB1/importin beta-1 without previous binding to KPNA1/importin alpha-1. Interacts with EIF2AK2. Interacts with host nucleosome assembly protein NAP1L1; this interaction may be required for the transport of Tat within the nucleus, since the two proteins interact at the nuclear rim. Interacts with host C1QBP/SF2P32; this interaction involves lysine-acetylated Tat. Interacts with the host chemokine receptors CCR2, CCR3 and CXCR4. Interacts with host DPP4/CD26; this interaction may trigger an anti-proliferative effect. Interacts with host LDLR. Interacts with the host extracellular matrix metalloproteinase MMP1. Interacts with host PRMT6; this interaction mediates Tat's methylation. Interacts with, and is ubiquitinated by MDM2/Hdm2. Interacts with host PSMC3 and HTATIP2. Interacts with STAB1; this interaction may overcome SATB1-mediated repression of IL2 and IL2RA (interleukin) in T cells by binding to the same domain than HDAC1. Interacts (when acetylated) with human CDK13, thereby increasing HIV-1 mRNA splicing and promoting the production of the doubly spliced HIV-1 protein Nef. In terms of processing, acetylation by EP300, CREBBP, GCN5L2/GCN5 and PCAF regulates the transactivation activity of Tat. Phosphorylated by EIF2AK2 on serine and threonine residues adjacent to the basic region important for TAR RNA binding and function. Phosphorylation of Tat by EIF2AK2 is dependent on the prior activation of EIF2AK2 by dsRNA. Post-translationally, asymmetrical arginine methylation by host PRMT6 seems to diminish the transactivation capacity of Tat and affects the interaction with host CCNT1. In terms of processing, polyubiquitination by MDM2 does not target Tat to degradation, but activates its transactivation function and fosters interaction with CCNT1 and TAR RNA.

It localises to the host nucleus. The protein localises to the host nucleolus. Its subcellular location is the host cytoplasm. It is found in the secreted. Transcriptional activator that increases RNA Pol II processivity, thereby increasing the level of full-length viral transcripts. Recognizes a hairpin structure at the 5'-LTR of the nascent viral mRNAs referred to as the transactivation responsive RNA element (TAR) and recruits the cyclin T1-CDK9 complex (P-TEFb complex) that will in turn hyperphosphorylate the RNA polymerase II to allow efficient elongation. The CDK9 component of P-TEFb and other Tat-activated kinases hyperphosphorylate the C-terminus of RNA Pol II that becomes stabilized and much more processive. Other factors such as HTATSF1/Tat-SF1, SUPT5H/SPT5, and HTATIP2 are also important for Tat's function. Besides its effect on RNA Pol II processivity, Tat induces chromatin remodeling of proviral genes by recruiting the histone acetyltransferases (HATs) CREBBP, EP300 and PCAF to the chromatin. This also contributes to the increase in proviral transcription rate, especially when the provirus integrates in transcriptionally silent region of the host genome. To ensure maximal activation of the LTR, Tat mediates nuclear translocation of NF-kappa-B by interacting with host RELA. Through its interaction with host TBP, Tat may also modulate transcription initiation. Tat can reactivate a latently infected cell by penetrating in it and transactivating its LTR promoter. In the cytoplasm, Tat is thought to act as a translational activator of HIV-1 mRNAs. Functionally, extracellular circulating Tat can be endocytosed by surrounding uninfected cells via the binding to several surface receptors such as CD26, CXCR4, heparan sulfate proteoglycans (HSPG) or LDLR. Neurons are rarely infected, but they internalize Tat via their LDLR. Endosomal low pH allows Tat to cross the endosome membrane to enter the cytosol and eventually further translocate into the nucleus, thereby inducing severe cell dysfunctions ranging from cell activation to cell death. Through its interaction with nuclear HATs, Tat is potentially able to control the acetylation-dependent cellular gene expression. Tat seems to inhibit the HAT activity of KAT5/Tip60 and TAF1, and consequently modify the expression of specific cellular genes. Modulates the expression of many cellular genes involved in cell survival, proliferation or in coding for cytokines (such as IL10) or cytokine receptors. May be involved in the derepression of host interleukin IL2 expression. Mediates the activation of cyclin-dependent kinases and dysregulation of microtubule network. Tat plays a role in T-cell and neurons apoptosis. Tat induced neurotoxicity and apoptosis probably contribute to neuroAIDS. Host extracellular matrix metalloproteinase MMP1 cleaves Tat and decreases Tat's mediated neurotoxicity. Circulating Tat also acts as a chemokine-like and/or growth factor-like molecule that binds to specific receptors on the surface of the cells, affecting many cellular pathways. In the vascular system, Tat binds to ITGAV/ITGB3 and ITGA5/ITGB1 integrins dimers at the surface of endothelial cells and competes with bFGF for heparin-binding sites, leading to an excess of soluble bFGF. Binds to KDR/VEGFR-2. All these Tat-mediated effects enhance angiogenesis in Kaposi's sarcoma lesions. The polypeptide is Protein Tat (Homo sapiens (Human)).